An 856-amino-acid chain; its full sequence is Phosphoenolpyruvate synthase (856 aa).

The active-site Tele-phosphohistidine intermediate is the H433. Substrate contacts are provided by R523, R636, E738, G759, S760, N761, and D762. Mg(2+) is bound at residue E738. D762 lines the Mg(2+) pocket. The active-site Proton donor is C809.

It belongs to the PEP-utilizing enzyme family. The cofactor is Mg(2+).

It catalyses the reaction pyruvate + ATP + H2O = phosphoenolpyruvate + AMP + phosphate + 2 H(+). It functions in the pathway carbohydrate biosynthesis; gluconeogenesis. Functionally, catalyzes the phosphorylation of pyruvate to phosphoenolpyruvate. The sequence is that of Phosphoenolpyruvate synthase (ppsA) from Aquifex aeolicus (strain VF5).